We begin with the raw amino-acid sequence, 671 residues long: DNA ligase (671 aa).

Residues 31–35 (DAEYD), 80–81 (SL), and glutamate 110 contribute to the NAD(+) site. Residue lysine 112 is the N6-AMP-lysine intermediate of the active site. NAD(+) is bound by residues arginine 133, glutamate 167, lysine 283, and lysine 307. Residues cysteine 401, cysteine 404, cysteine 419, and cysteine 424 each contribute to the Zn(2+) site. Residues 587-671 (EEELVFAGKT…YLPDEGGLNE (85 aa)) form the BRCT domain.

This sequence belongs to the NAD-dependent DNA ligase family. LigA subfamily. Requires Mg(2+) as cofactor. Mn(2+) is required as a cofactor.

The enzyme catalyses NAD(+) + (deoxyribonucleotide)n-3'-hydroxyl + 5'-phospho-(deoxyribonucleotide)m = (deoxyribonucleotide)n+m + AMP + beta-nicotinamide D-nucleotide.. DNA ligase that catalyzes the formation of phosphodiester linkages between 5'-phosphoryl and 3'-hydroxyl groups in double-stranded DNA using NAD as a coenzyme and as the energy source for the reaction. It is essential for DNA replication and repair of damaged DNA. In Listeria monocytogenes serotype 4b (strain CLIP80459), this protein is DNA ligase.